A 321-amino-acid polypeptide reads, in one-letter code: Glucokinase (321 aa).

Residue Gly-8–Thr-13 coordinates ATP.

This sequence belongs to the bacterial glucokinase family.

Its subcellular location is the cytoplasm. The catalysed reaction is D-glucose + ATP = D-glucose 6-phosphate + ADP + H(+). This Escherichia coli (strain SMS-3-5 / SECEC) protein is Glucokinase.